Consider the following 667-residue polypeptide: Threonine--tRNA ligase (667 aa).

In terms of domain architecture, TGS spans 1-64 (MSEAISLTFP…TDGKIEIVTR (64 aa)). The segment at 245–553 (DHRRLGREMD…LIENFAGHMP (309 aa)) is catalytic. Residues cysteine 347, histidine 398, and histidine 530 each coordinate Zn(2+).

Belongs to the class-II aminoacyl-tRNA synthetase family. As to quaternary structure, homodimer. The cofactor is Zn(2+).

The protein localises to the cytoplasm. The catalysed reaction is tRNA(Thr) + L-threonine + ATP = L-threonyl-tRNA(Thr) + AMP + diphosphate + H(+). Catalyzes the attachment of threonine to tRNA(Thr) in a two-step reaction: L-threonine is first activated by ATP to form Thr-AMP and then transferred to the acceptor end of tRNA(Thr). Also edits incorrectly charged L-seryl-tRNA(Thr). This chain is Threonine--tRNA ligase, found in Agrobacterium fabrum (strain C58 / ATCC 33970) (Agrobacterium tumefaciens (strain C58)).